The sequence spans 446 residues: Hercynine oxygenase (446 aa).

His51 serves as a coordination point for Fe cation. 87 to 90 (RASR) provides a ligand contact to gamma-L-glutamyl-L-cysteine. Residues His134 and His138 each coordinate Fe cation. Residues Asp416 and Arg420 each coordinate gamma-L-glutamyl-L-cysteine.

The protein belongs to the EgtB family. In terms of assembly, monomer. The cofactor is Fe(2+).

It catalyses the reaction gamma-L-glutamyl-L-cysteine + hercynine + O2 = gamma-L-glutamyl-hercynylcysteine S-oxide + H2O. It participates in amino-acid biosynthesis; ergothioneine biosynthesis. Catalyzes the oxidative sulfurization of hercynine (N-alpha,N-alpha,N-alpha-trimethyl-L-histidine) into hercynyl-gamma-L-glutamyl-L-cysteine sulfoxide, a step in the biosynthesis pathway of ergothioneine. This is Hercynine oxygenase from Mycolicibacterium thermoresistibile (strain ATCC 19527 / DSM 44167 / CIP 105390 / JCM 6362 / NCTC 10409 / 316) (Mycobacterium thermoresistibile).